The sequence spans 334 residues: Ornithine carbamoyltransferase (334 aa).

Residues 57 to 60, Gln84, Arg108, and 135 to 138 contribute to the carbamoyl phosphate site; these read STRT and HPTQ. Residues Asn169, Asp233, and 237–238 contribute to the L-ornithine site; that span reads SM. Carbamoyl phosphate-binding positions include 275–276 and Arg320; that span reads CL.

Belongs to the aspartate/ornithine carbamoyltransferase superfamily. OTCase family.

Its subcellular location is the cytoplasm. It carries out the reaction carbamoyl phosphate + L-ornithine = L-citrulline + phosphate + H(+). Its pathway is amino-acid biosynthesis; L-arginine biosynthesis; L-arginine from L-ornithine and carbamoyl phosphate: step 1/3. Functionally, reversibly catalyzes the transfer of the carbamoyl group from carbamoyl phosphate (CP) to the N(epsilon) atom of ornithine (ORN) to produce L-citrulline. The chain is Ornithine carbamoyltransferase from Aeromonas salmonicida (strain A449).